A 381-amino-acid polypeptide reads, in one-letter code: Cytochrome b (381 aa).

A run of 4 helical transmembrane segments spans residues 34 to 54, 78 to 99, 114 to 134, and 179 to 199; these read FGSH…FLAM, WLIR…YLHI, WNIG…GYVL, and FFAF…IHLL. 2 residues coordinate heme b: H84 and H98. Heme b-binding residues include H183 and H197. Residue H202 coordinates a ubiquinone. 4 consecutive transmembrane segments (helical) span residues 227 to 247, 289 to 309, 321 to 341, and 348 to 368; these read YKDL…ALFM, LGGV…PLLH, MTQI…WIGG, and FIMV…IIMP.

The protein belongs to the cytochrome b family. As to quaternary structure, the cytochrome bc1 complex contains 3 respiratory subunits (MT-CYB, CYC1 and UQCRFS1), 2 core proteins (UQCRC1 and UQCRC2) and probably 6 low-molecular weight proteins. Heme b serves as cofactor.

The protein resides in the mitochondrion inner membrane. Functionally, component of the ubiquinol-cytochrome c reductase complex (complex III or cytochrome b-c1 complex) that is part of the mitochondrial respiratory chain. The b-c1 complex mediates electron transfer from ubiquinol to cytochrome c. Contributes to the generation of a proton gradient across the mitochondrial membrane that is then used for ATP synthesis. The chain is Cytochrome b (mt-cyb) from Carcharhinus porosus (Smalltail shark).